The sequence spans 593 residues: Probable metalloprotease ARX1 (593 aa).

The protein belongs to the peptidase M24 family. As to quaternary structure, component of the nucleoplasmic and cytoplasmic pre-60S ribosomal particles. Interacts directly with REI1.

Its subcellular location is the cytoplasm. It is found in the nucleus. Its function is as follows. Probable metalloprotease involved in proper assembly of pre-ribosomal particles during the biogenesis of the 60S ribosomal subunit. Accompanies the pre-60S particles to the cytoplasm. The protein is Probable metalloprotease ARX1 (ARX1) of Saccharomyces cerevisiae (strain ATCC 204508 / S288c) (Baker's yeast).